Reading from the N-terminus, the 307-residue chain is Replication termination factor 2 (307 aa).

Residues 193-296 (AKLEKKTKKP…SSAKRSKEES (104 aa)) are disordered. Positions 227-241 (GKPEEADPDPREKKS) are enriched in basic and acidic residues. Position 288 is a phosphoserine (Ser-288).

This sequence belongs to the rtf2 family. In terms of assembly, interacts with DDI2; probably also interacts with DDI1. Post-translationally, undergoes proteasomal degradation, via DDI1 and DDI2. Removal from stalled replisomes and degradation are required for genome stability.

The protein resides in the chromosome. Functionally, replication termination factor which is a component of the elongating replisome. Required for ATR pathway signaling upon DNA damage and has a positive activity during DNA replication. Might function to facilitate fork pausing at replication fork barriers like the rDNA. May be globally required to stimulate ATR signaling after the fork stalls or encounters a lesion. Interacts with nascent DNA. The polypeptide is Replication termination factor 2 (Mus musculus (Mouse)).